The following is a 672-amino-acid chain: SHC SH2 domain-binding protein 1 (672 aa).

At A2 the chain carries N-acetylalanine. S5 is subject to Phosphoserine. T7 bears the Phosphothreonine mark. Residues S31, S42, S44, S47, and S273 each carry the phosphoserine modification. PbH1 repeat units follow at residues 428–451 (GADI…LIVH), 452–473 (RGKT…TVRT), 474–496 (SAEF…EIYP), 497–518 (GSQC…LIKD), and 526–548 (IPKI…VLVK). S634 carries the post-translational modification Phosphoserine.

In terms of assembly, interacts directly with isoform p52shc of SHC1 via its SH2 domain. Interacts with TRIM71; leading to enhanced SHCBP1 protein stability. Interacts with both members of the centralspindlin complex, KIF23 and RACGAP1.

It localises to the midbody. The protein resides in the cytoplasm. It is found in the cytoskeleton. Its subcellular location is the spindle. May play a role in signaling pathways governing cellular proliferation, cell growth and differentiation. May be a component of a novel signaling pathway downstream of Shc. Acts as a positive regulator of FGF signaling in neural progenitor cells. This is SHC SH2 domain-binding protein 1 (SHCBP1) from Homo sapiens (Human).